The primary structure comprises 271 residues: 3-methyl-2-oxobutanoate hydroxymethyltransferase 1 (271 aa).

Mg(2+) is bound by residues aspartate 53 and aspartate 92. 3-methyl-2-oxobutanoate-binding positions include 53–54 (DS), aspartate 92, and lysine 120. Mg(2+) is bound at residue glutamate 122. Glutamate 189 serves as the catalytic Proton acceptor.

Belongs to the PanB family. As to quaternary structure, homodecamer; pentamer of dimers. The cofactor is Mg(2+).

The protein resides in the cytoplasm. It catalyses the reaction 3-methyl-2-oxobutanoate + (6R)-5,10-methylene-5,6,7,8-tetrahydrofolate + H2O = 2-dehydropantoate + (6S)-5,6,7,8-tetrahydrofolate. It functions in the pathway cofactor biosynthesis; (R)-pantothenate biosynthesis; (R)-pantoate from 3-methyl-2-oxobutanoate: step 1/2. In terms of biological role, catalyzes the reversible reaction in which hydroxymethyl group from 5,10-methylenetetrahydrofolate is transferred onto alpha-ketoisovalerate to form ketopantoate. This chain is 3-methyl-2-oxobutanoate hydroxymethyltransferase 1, found in Burkholderia cenocepacia (strain HI2424).